A 95-amino-acid chain; its full sequence is Large ribosomal subunit protein bL25 (95 aa).

It belongs to the bacterial ribosomal protein bL25 family. Part of the 50S ribosomal subunit; part of the 5S rRNA/L5/L18/L25 subcomplex. Contacts the 5S rRNA. Binds to the 5S rRNA independently of L5 and L18.

This is one of the proteins that binds to the 5S RNA in the ribosome where it forms part of the central protuberance. The protein is Large ribosomal subunit protein bL25 of Aeromonas salmonicida (strain A449).